We begin with the raw amino-acid sequence, 349 residues long: Fe(3+) ions import ATP-binding protein FbpC (349 aa).

The ABC transporter domain maps to 4–236 (LELHHIGKSY…PVDEPTATFL (233 aa)). Position 36-43 (36-43 (GPSGSGKT)) interacts with ATP.

This sequence belongs to the ABC transporter superfamily. Fe(3+) ion importer (TC 3.A.1.10) family. The complex is composed of two ATP-binding proteins (FbpC), two transmembrane proteins (FbpB) and a solute-binding protein (FbpA).

It localises to the cell inner membrane. The enzyme catalyses Fe(3+)(out) + ATP + H2O = Fe(3+)(in) + ADP + phosphate + H(+). In terms of biological role, part of the ABC transporter complex FbpABC involved in Fe(3+) ions import. Responsible for energy coupling to the transport system. The sequence is that of Fe(3+) ions import ATP-binding protein FbpC from Yersinia pseudotuberculosis serotype I (strain IP32953).